The chain runs to 1388 residues: DNA-directed RNA polymerase subunit beta' (1388 aa).

The Zn(2+) site is built by Cys-70, Cys-72, Cys-85, and Cys-88. Mg(2+)-binding residues include Asp-461, Asp-463, and Asp-465. Zn(2+)-binding residues include Cys-808, Cys-882, Cys-889, and Cys-892.

It belongs to the RNA polymerase beta' chain family. The RNAP catalytic core consists of 2 alpha, 1 beta, 1 beta' and 1 omega subunit. When a sigma factor is associated with the core the holoenzyme is formed, which can initiate transcription. It depends on Mg(2+) as a cofactor. The cofactor is Zn(2+).

The catalysed reaction is RNA(n) + a ribonucleoside 5'-triphosphate = RNA(n+1) + diphosphate. In terms of biological role, DNA-dependent RNA polymerase catalyzes the transcription of DNA into RNA using the four ribonucleoside triphosphates as substrates. The protein is DNA-directed RNA polymerase subunit beta' of Acidiphilium cryptum (strain JF-5).